Here is an 852-residue protein sequence, read N- to C-terminus: Bifunctional uridylyltransferase/uridylyl-removing enzyme (852 aa).

Residues 1–318 (MPENLSSALE…STPVRVTLRI (318 aa)) form a uridylyltransferase region. The interval 319–672 (DDDYIQVNNQ…SRILPQSDSF (354 aa)) is uridylyl-removing. An HD domain is found at 436 to 558 (VDDHILAVVR…VQTHERLSAL (123 aa)). ACT domains are found at residues 673–757 (QVMV…SCNR) and 785–852 (SVEI…EQLA).

It belongs to the GlnD family. Mg(2+) is required as a cofactor.

The enzyme catalyses [protein-PII]-L-tyrosine + UTP = [protein-PII]-uridylyl-L-tyrosine + diphosphate. It catalyses the reaction [protein-PII]-uridylyl-L-tyrosine + H2O = [protein-PII]-L-tyrosine + UMP + H(+). Uridylyltransferase (UTase) activity is inhibited by glutamine, while glutamine activates uridylyl-removing (UR) activity. Modifies, by uridylylation and deuridylylation, the PII regulatory proteins (GlnB and homologs), in response to the nitrogen status of the cell that GlnD senses through the glutamine level. Under low glutamine levels, catalyzes the conversion of the PII proteins and UTP to PII-UMP and PPi, while under higher glutamine levels, GlnD hydrolyzes PII-UMP to PII and UMP (deuridylylation). Thus, controls uridylylation state and activity of the PII proteins, and plays an important role in the regulation of nitrogen assimilation and metabolism. The sequence is that of Bifunctional uridylyltransferase/uridylyl-removing enzyme from Neisseria gonorrhoeae (strain ATCC 700825 / FA 1090).